The primary structure comprises 279 residues: NH(3)-dependent NAD(+) synthetase (279 aa).

39-46 is an ATP binding site; sequence GLSGGIDS. Residue D45 coordinates Mg(2+). Residue R122 coordinates deamido-NAD(+). Position 142 (T142) interacts with ATP. Residue E147 participates in Mg(2+) binding. Positions 155 and 162 each coordinate deamido-NAD(+). 2 residues coordinate ATP: K171 and S193. 253–254 serves as a coordination point for deamido-NAD(+); the sequence is HK.

Belongs to the NAD synthetase family. As to quaternary structure, homodimer.

The catalysed reaction is deamido-NAD(+) + NH4(+) + ATP = AMP + diphosphate + NAD(+) + H(+). The protein operates within cofactor biosynthesis; NAD(+) biosynthesis; NAD(+) from deamido-NAD(+) (ammonia route): step 1/1. In terms of biological role, catalyzes the ATP-dependent amidation of deamido-NAD to form NAD. Uses ammonia as a nitrogen source. This is NH(3)-dependent NAD(+) synthetase from Sulfolobus acidocaldarius (strain ATCC 33909 / DSM 639 / JCM 8929 / NBRC 15157 / NCIMB 11770).